Reading from the N-terminus, the 479-residue chain is UDP-N-acetylmuramoyl-L-alanyl-D-glutamate--2,6-diaminopimelate ligase (479 aa).

S21 contacts UDP-N-acetyl-alpha-D-muramoyl-L-alanyl-D-glutamate. Position 98-104 (98-104 (GTNGKSS)) interacts with ATP. UDP-N-acetyl-alpha-D-muramoyl-L-alanyl-D-glutamate is bound by residues 144-145 (TT), S171, Q177, and R179. K211 is modified (N6-carboxylysine). Residues R372, 396–399 (DNPR), G446, and E450 each bind meso-2,6-diaminopimelate. Residues 396–399 (DNPR) carry the Meso-diaminopimelate recognition motif motif.

This sequence belongs to the MurCDEF family. MurE subfamily. Mg(2+) is required as a cofactor. Carboxylation is probably crucial for Mg(2+) binding and, consequently, for the gamma-phosphate positioning of ATP.

The protein resides in the cytoplasm. It carries out the reaction UDP-N-acetyl-alpha-D-muramoyl-L-alanyl-D-glutamate + meso-2,6-diaminopimelate + ATP = UDP-N-acetyl-alpha-D-muramoyl-L-alanyl-gamma-D-glutamyl-meso-2,6-diaminopimelate + ADP + phosphate + H(+). It participates in cell wall biogenesis; peptidoglycan biosynthesis. Functionally, catalyzes the addition of meso-diaminopimelic acid to the nucleotide precursor UDP-N-acetylmuramoyl-L-alanyl-D-glutamate (UMAG) in the biosynthesis of bacterial cell-wall peptidoglycan. The polypeptide is UDP-N-acetylmuramoyl-L-alanyl-D-glutamate--2,6-diaminopimelate ligase (Rickettsia montanensis).